The sequence spans 232 residues: Ribonuclease P protein component 3 (232 aa).

It belongs to the eukaryotic/archaeal RNase P protein component 3 family. Consists of a catalytic RNA component and at least 5 protein subunits.

It localises to the cytoplasm. It carries out the reaction Endonucleolytic cleavage of RNA, removing 5'-extranucleotides from tRNA precursor.. Part of ribonuclease P, a protein complex that generates mature tRNA molecules by cleaving their 5'-ends. This is Ribonuclease P protein component 3 from Methanococcus maripaludis (strain DSM 14266 / JCM 13030 / NBRC 101832 / S2 / LL).